The primary structure comprises 37 residues: Delta/kappa-conotoxin Mo3964 (37 aa).

3 disulfides stabilise this stretch: Cys-4–Cys-12, Cys-11–Cys-27, and Cys-21–Cys-34.

Expressed by the venom duct.

The protein localises to the secreted. This toxin reduces the outward currents that are due to the opening of voltage-gated potassium channels in DRG neurons. In addition, leftward shift in the presence of this toxin is observed in averaged normalized conductance-voltage plot of outward sodium currents (Nav1.2/SCN2A). This is Delta/kappa-conotoxin Mo3964 from Conus monile (Necklace cone).